We begin with the raw amino-acid sequence, 308 residues long: Phenylcoumaran benzylic ether reductase 1 (308 aa).

Residues Gly11–Gly17, Arg36, and Arg45 contribute to the NADP(+) site. Residue Lys133 is the Proton acceptor of the active site. Arg137 contacts NADP(+).

It belongs to the NmrA-type oxidoreductase family. Isoflavone reductase subfamily. In terms of tissue distribution, expressed in apical meristem and cotyledon veins of young seedlings. Expressed in vascular tissues of roots, leaves, stems and petals. Expressed in pollen grains. Expressed at low levels in cauline leaves and siliques.

It catalyses the reaction (-)-dehydrodiconiferyl alcohol + NADPH + H(+) = (S)-isodihydrodehydrodiconiferyl alcohol + NADP(+). The enzyme catalyses (+)-dehydrodiconiferyl alcohol + NADPH + H(+) = (R)-isodihydrodehydrodiconiferyl alcohol + NADP(+). It carries out the reaction (2R,3S)-dihydrodehydrodiconiferyl alcohol + NADPH + H(+) = (S)-tetrahydrodehydrodiconiferyl alcohol + NADP(+). The catalysed reaction is (2S,3R)-dihydrodehydrodiconiferyl alcohol + NADPH + H(+) = (R)-tetrahydrodehydrodiconiferyl alcohol + NADP(+). Its function is as follows. Oxidoreductase involved in lignan biosynthesis. Catalyzes the NADPH-dependent reduction of phenylcoumaran benzylic ethers. Converts dehydrodiconiferyl alcohol (DDC) to isodihydrodehydrodiconiferyl alcohol (IDDDC), and dihydrodehydrodiconiferyl alcohol (DDDC) to tetrahydrodehydrodiconiferyl alcohol (TDDC). Plays an important role in the biosynthesis of secondary metabolites. In addition to the 8-5'-linked neolignan DDC, can reduce the 8-8'-linked lignans, pinoresinol, and lariciresinol, but with lower activities. This chain is Phenylcoumaran benzylic ether reductase 1, found in Arabidopsis thaliana (Mouse-ear cress).